A 119-amino-acid polypeptide reads, in one-letter code: Protein phosphatase EYA1 (119 aa).

It belongs to the HAD-like hydrolase superfamily. EYA family. It depends on Mg(2+) as a cofactor.

The protein resides in the cytoplasm. Its subcellular location is the nucleus. The enzyme catalyses O-phospho-L-tyrosyl-[protein] + H2O = L-tyrosyl-[protein] + phosphate. The catalysed reaction is O-phospho-L-seryl-[protein] + H2O = L-seryl-[protein] + phosphate. It catalyses the reaction O-phospho-L-threonyl-[protein] + H2O = L-threonyl-[protein] + phosphate. In terms of biological role, functions both as protein phosphatase and as transcriptional coactivator for SIX1, and probably also for other transcription factors of this family. Tyrosine phosphatase that dephosphorylates 'Tyr-142' of histone H2AX (H2AXY142ph) and promotes efficient DNA repair via the recruitment of DNA repair complexes containing MDC1. 'Tyr-142' phosphorylation of histone H2AX plays a central role in DNA repair and acts as a mark that distinguishes between apoptotic and repair responses to genotoxic stress. Its function as histone phosphatase may contribute to its function in transcription regulation during organogenesis. Also has phosphatase activity with proteins phosphorylated on Ser and Thr residues (in vitro). Required for normal embryonic development of the skeleton, kidneys and ears. In Gallus gallus (Chicken), this protein is Protein phosphatase EYA1 (EYA1).